Reading from the N-terminus, the 304-residue chain is Sulfotransferase 1C3 (304 aa).

56–61 (KSGTTW) contacts 3'-phosphoadenylyl sulfate. 115–117 (KTH) is a substrate binding site. The Proton acceptor role is filled by histidine 117. Residues arginine 139, serine 147, tyrosine 202, 236 to 241 (TSFDVM), and 264 to 268 (FMRKG) each bind 3'-phosphoadenylyl sulfate.

Belongs to the sulfotransferase 1 family. As to expression, not detectable in any of the tissues tested. Expressed in the small intestine.

Its subcellular location is the cytoplasm. It carries out the reaction an alcohol + 3'-phosphoadenylyl sulfate = an alkyl sulfate + adenosine 3',5'-bisphosphate + H(+). It catalyses the reaction a phenol + 3'-phosphoadenylyl sulfate = an aryl sulfate + adenosine 3',5'-bisphosphate + H(+). The enzyme catalyses lithocholate + 3'-phosphoadenylyl sulfate = lithocholate sulfate + adenosine 3',5'-bisphosphate + H(+). Functionally, sulfotransferase that utilizes 3'-phospho-5'-adenylyl sulfate (PAPS) as sulfonate donor. Has sulfotransferase activity towards various substrates, such as bile acids, thyroid hormones and toward xenobiotic compounds such as chloro phenols and hydroxypyrenes. Lithocholic acid appears to be the best substrate among the endogenous compounds tested and 3,3',5,5'-tetrachloro-4,4'-biphenyldiol shows the highest specific activity among the xenobiotic compounds. In terms of biological role, exhibits weak sulphating activity and only toward chloro phenols (pentachlorophenol and 3,3',5,5'-tetrachloro-4,4'-biphenyldiol). The protein is Sulfotransferase 1C3 (SULT1C3) of Homo sapiens (Human).